Consider the following 369-residue polypeptide: Cyclin-I2 (369 aa).

The segment at 1 to 116 (MASGAQLPPQ…SRKPRNLEGD (116 aa)) is disordered. Composition is skewed to low complexity over residues 64–76 (AASL…AVPV) and 83–101 (APAG…EQAP).

The protein belongs to the cyclin family.

The sequence is that of Cyclin-I2 (CCNI2) from Homo sapiens (Human).